The sequence spans 314 residues: Olfactory receptor 51I1 (314 aa).

The Extracellular segment spans residues 1 to 27; it reads MLGLNGTPFQPATLQLTGIPGIQTGLT. The helical transmembrane segment at 28-48 threads the bilayer; the sequence is WVALIFCILYMISIVGNLSIL. At 49–56 the chain is on the cytoplasmic side; sequence TLVFWEPA. The helical transmembrane segment at 57–77 threads the bilayer; it reads LHQPMYYFLSMLALNDLGVSF. Residues 78 to 101 are Extracellular-facing; the sequence is STLPTVISTFCFNYNHVAFNACLV. A disulfide bridge connects residues Cys-99 and Cys-191. The helical transmembrane segment at 102–122 threads the bilayer; sequence QMFFIHTFSFMESGILLAMSL. The Cytoplasmic segment spans residues 123 to 141; sequence DRFVAICYPLRYVTVLTHN. A helical membrane pass occupies residues 142-162; sequence RILAMGLGILTKSFTTLFPFP. Over 163-198 the chain is Extracellular; that stretch reads FVVKRLPFCKGNVLHHSYCLHPDLMKVACGDIHVNN. Residues 199 to 219 traverse the membrane as a helical segment; that stretch reads IYGLLVIIFTYGMDSTFILLS. At 220 to 239 the chain is on the cytoplasmic side; that stretch reads YALILRAMLVIISQEQRLKA. A helical transmembrane segment spans residues 240–260; that stretch reads LNTCMSHICAVLAFYVPIIAV. Residues 261–275 are Extracellular-facing; it reads SMIHRFWKSAPPVVH. A helical transmembrane segment spans residues 276-296; sequence VMMSNVYLFVPPMLNPIIYSV. Residues 297–314 lie on the Cytoplasmic side of the membrane; sequence KTKEIRKGILKFFHKSQA.

The protein belongs to the G-protein coupled receptor 1 family.

The protein localises to the cell membrane. Functionally, odorant receptor. This is Olfactory receptor 51I1 (OR51I1) from Homo sapiens (Human).